The primary structure comprises 208 residues: Thymidylate kinase (208 aa).

Position 10-17 (10-17 (GPEGSGKT)) interacts with ATP.

This sequence belongs to the thymidylate kinase family.

It carries out the reaction dTMP + ATP = dTDP + ADP. Its function is as follows. Phosphorylation of dTMP to form dTDP in both de novo and salvage pathways of dTTP synthesis. The protein is Thymidylate kinase of Bacillus anthracis.